Here is a 1000-residue protein sequence, read N- to C-terminus: Ribosome assembly protein 1 (1000 aa).

The region spanning 17–246 is the tr-type G domain; that stretch reads ENIRNFTLLA…YEKKLGLKQK (230 aa). GTP contacts are provided by residues 26–33, 100–104, and 154–157; these read AHVDHGKT, DSPGH, and NKMD.

This sequence belongs to the TRAFAC class translation factor GTPase superfamily. Classic translation factor GTPase family.

It is found in the cytoplasm. It carries out the reaction GTP + H2O = GDP + phosphate + H(+). GTPase activity is stimulated in the presence of 60S subunits. Functionally, GTPase involved in the biogenesis of the 60S ribosomal subunit and translational activation of ribosomes. Together with sdo1, may trigger the GTP-dependent release of tif6 from 60S pre-ribosomes in the cytoplasm, thereby activating ribosomes for translation competence by allowing 80S ribosome assembly and facilitating tif6 recycling to the nucleus, where it is required for 60S rRNA processing and nuclear export. Inhibits GTPase activity of ribosome-bound EF-2. The polypeptide is Ribosome assembly protein 1 (ria1) (Schizosaccharomyces pombe (strain 972 / ATCC 24843) (Fission yeast)).